We begin with the raw amino-acid sequence, 320 residues long: Cytochrome f (320 aa).

An N-terminal signal peptide occupies residues M1 to A35. 4 residues coordinate heme: Y36, C56, C59, and H60. The chain crosses the membrane as a helical span at residues V286 to K306.

This sequence belongs to the cytochrome f family. In terms of assembly, the 4 large subunits of the cytochrome b6-f complex are cytochrome b6, subunit IV (17 kDa polypeptide, petD), cytochrome f and the Rieske protein, while the 4 small subunits are PetG, PetL, PetM and PetN. The complex functions as a dimer. Heme serves as cofactor.

It is found in the plastid. It localises to the chloroplast thylakoid membrane. Functionally, component of the cytochrome b6-f complex, which mediates electron transfer between photosystem II (PSII) and photosystem I (PSI), cyclic electron flow around PSI, and state transitions. This is Cytochrome f from Solanum bulbocastanum (Wild potato).